Consider the following 299-residue polypeptide: Acetylglutamate kinase (299 aa).

Substrate is bound by residues 68–69 (GG), R90, and N195.

This sequence belongs to the acetylglutamate kinase family. ArgB subfamily.

It localises to the cytoplasm. The catalysed reaction is N-acetyl-L-glutamate + ATP = N-acetyl-L-glutamyl 5-phosphate + ADP. It participates in amino-acid biosynthesis; L-arginine biosynthesis; N(2)-acetyl-L-ornithine from L-glutamate: step 2/4. Its function is as follows. Catalyzes the ATP-dependent phosphorylation of N-acetyl-L-glutamate. The protein is Acetylglutamate kinase of Erythrobacter litoralis (strain HTCC2594).